The sequence spans 230 residues: MPGLRPLLSPPASEALLLAQAQQLSGYSLGELAALAGLVAPKDLKRDKGWIGVLLEIWLGASAGSKPEQDFAALGVELKTIPVDSLGHPLETTFVCVAPLTGNSGVTWETSHVRHKLKRVLWVPVEGDRSIPLADRRVGSPLLWSPNEEEDQQLRLDWEELMDMIVLGQVERITARHGEFLQLRPKAANAKALTEAIGAQGETILTLPRGFYLKKNFTRTLLARHFLLQG.

Belongs to the MutH family.

It is found in the cytoplasm. Sequence-specific endonuclease that cleaves unmethylated GATC sequences. It is involved in DNA mismatch repair. The chain is DNA mismatch repair protein MutH from Citrobacter koseri (strain ATCC BAA-895 / CDC 4225-83 / SGSC4696).